The following is an 809-amino-acid chain: Glutamine--tRNA ligase (809 aa).

The span at 185-198 (DLIKKKTKNNEKKK) shows a compositional bias: basic and acidic residues. Positions 185 to 216 (DLIKKKTKNNEKKKTNSAKKSSDNSASSGPKR) are disordered. The 'HIGH' region signature appears at 258–268 (PEPNGYLHIGH). ATP is bound by residues 259 to 261 (EPN) and 265 to 271 (HIGHSKA). D291 is an L-glutamine binding site. Residue S378 is modified to Phosphoserine. Y440 contributes to the L-glutamine binding site. Residues T459, 488–489 (RL), and 496–498 (LSK) each bind ATP. The 'KMSKS' region motif lies at 495 to 499 (VLSKR).

The protein belongs to the class-I aminoacyl-tRNA synthetase family.

It carries out the reaction tRNA(Gln) + L-glutamine + ATP = L-glutaminyl-tRNA(Gln) + AMP + diphosphate. The polypeptide is Glutamine--tRNA ligase (GLN4) (Saccharomyces cerevisiae (strain ATCC 204508 / S288c) (Baker's yeast)).